Reading from the N-terminus, the 309-residue chain is MNSPDIALIKTYLLTLQDNICGALAQADGHAEFTEECWVREEGGGGRSRVLVNGAVFEQAGVNFSHVSGAMLPASATAHRPELAGRSFQALGVSLVIHPLNPYLPTSHANVRFFIAEKPGEDAVWWFGGGFDLTPYYGFEEDAIHWHQVAHSLCQPFGEQIYPRYKKWCDDYFYIKHRQEARGIGGLFFDDLNSPDFMTCFNFTQAVGDGFLAAYMPIVARRKALGWGDRERQFQLYRRGRYVEFNLVWDRGTLFGLQTGGRTESILMSLPPLVRWEYNYQPEADSAEAALYRDFLPVKDWLAIKGETH.

Substrate is bound at residue Ser94. His98 and His108 together coordinate a divalent metal cation. The Proton donor role is filled by His108. Substrate is bound at residue Asn110–Arg112. Residues His147 and His177 each coordinate a divalent metal cation. Residues Tyr242–Glu277 are important for dimerization. Gly260–Arg262 serves as a coordination point for substrate.

This sequence belongs to the aerobic coproporphyrinogen-III oxidase family. In terms of assembly, homodimer. The cofactor is a divalent metal cation.

It is found in the cytoplasm. The enzyme catalyses coproporphyrinogen III + O2 + 2 H(+) = protoporphyrinogen IX + 2 CO2 + 2 H2O. It functions in the pathway porphyrin-containing compound metabolism; protoporphyrin-IX biosynthesis; protoporphyrinogen-IX from coproporphyrinogen-III (O2 route): step 1/1. Involved in the heme biosynthesis. Catalyzes the aerobic oxidative decarboxylation of propionate groups of rings A and B of coproporphyrinogen-III to yield the vinyl groups in protoporphyrinogen-IX. The polypeptide is Oxygen-dependent coproporphyrinogen-III oxidase (Yersinia pseudotuberculosis serotype O:1b (strain IP 31758)).